A 262-amino-acid chain; its full sequence is Indole-3-glycerol phosphate synthase (262 aa).

It belongs to the TrpC family.

It catalyses the reaction 1-(2-carboxyphenylamino)-1-deoxy-D-ribulose 5-phosphate + H(+) = (1S,2R)-1-C-(indol-3-yl)glycerol 3-phosphate + CO2 + H2O. It participates in amino-acid biosynthesis; L-tryptophan biosynthesis; L-tryptophan from chorismate: step 4/5. The protein is Indole-3-glycerol phosphate synthase of Leuconostoc mesenteroides subsp. mesenteroides (strain ATCC 8293 / DSM 20343 / BCRC 11652 / CCM 1803 / JCM 6124 / NCDO 523 / NBRC 100496 / NCIMB 8023 / NCTC 12954 / NRRL B-1118 / 37Y).